Reading from the N-terminus, the 199-residue chain is MSFSPLIRQLIDALRILPGVGQKTAQRMALQLLERDRSGGLRLAQALTRAMEGVGYCRQCRTLTEDELCPQCADPRRDDSLLCVVQSPVDVFAVEQTGFRGRYFVLKGHLSPLDGLGPEAIGIPELLGRVADGAFSEVILATNPTVEGEATAHYIAQMLIPKGLTISRIAHGVPLGGELDLVDGGTLAHALAGRKPISL.

Residues 57-72 (CRQCRTLTEDELCPQC) form a C4-type zinc finger. The Toprim domain occupies 80–174 (SLLCVVQSPV…TISRIAHGVP (95 aa)).

The protein belongs to the RecR family.

May play a role in DNA repair. It seems to be involved in an RecBC-independent recombinational process of DNA repair. It may act with RecF and RecO. This is Recombination protein RecR from Stutzerimonas stutzeri (strain A1501) (Pseudomonas stutzeri).